We begin with the raw amino-acid sequence, 203 residues long: N-(5'-phosphoribosyl)anthranilate isomerase (203 aa).

It belongs to the TrpF family.

It catalyses the reaction N-(5-phospho-beta-D-ribosyl)anthranilate = 1-(2-carboxyphenylamino)-1-deoxy-D-ribulose 5-phosphate. It functions in the pathway amino-acid biosynthesis; L-tryptophan biosynthesis; L-tryptophan from chorismate: step 3/5. This chain is N-(5'-phosphoribosyl)anthranilate isomerase, found in Geotalea uraniireducens (strain Rf4) (Geobacter uraniireducens).